The following is a 300-amino-acid chain: Bifunctional protein FolD (300 aa).

NADP(+)-binding positions include 169–171 and Ile-235; that span reads GHS.

Belongs to the tetrahydrofolate dehydrogenase/cyclohydrolase family. As to quaternary structure, homodimer.

It catalyses the reaction (6R)-5,10-methylene-5,6,7,8-tetrahydrofolate + NADP(+) = (6R)-5,10-methenyltetrahydrofolate + NADPH. The catalysed reaction is (6R)-5,10-methenyltetrahydrofolate + H2O = (6R)-10-formyltetrahydrofolate + H(+). It functions in the pathway one-carbon metabolism; tetrahydrofolate interconversion. Functionally, catalyzes the oxidation of 5,10-methylenetetrahydrofolate to 5,10-methenyltetrahydrofolate and then the hydrolysis of 5,10-methenyltetrahydrofolate to 10-formyltetrahydrofolate. This Rhodobacter capsulatus (strain ATCC BAA-309 / NBRC 16581 / SB1003) protein is Bifunctional protein FolD.